The sequence spans 359 residues: Prostaglandin F2-alpha receptor (359 aa).

At 1–31 (MSMNNSKQLVSPAAALLSNTTCQTENRLSVF) the chain is on the extracellular side. N-linked (GlcNAc...) asparagine glycosylation is found at asparagine 4 and asparagine 19. A helical membrane pass occupies residues 32–54 (FSVIFMTVGILSNSLAIAILMKA). Residues 55-69 (YQRFRQKSKASFLLL) are Cytoplasmic-facing. A helical transmembrane segment spans residues 70–90 (ASGLVITDFFGHLINGAIAVF). Over 91–109 (VYASDKEWIRFDQSNVLCS) the chain is Extracellular. An intrachain disulfide couples cysteine 108 to cysteine 186. A helical membrane pass occupies residues 110–131 (IFGICMVFSGLCPLLLGSVMAI). The Cytoplasmic portion of the chain corresponds to 132-152 (ERCIGVTKPIFHSTKITSKHV). The chain crosses the membrane as a helical span at residues 153 to 175 (KMMLSGVCLFAVFIALLPILGHR). At 176–198 (DYKIQASRTWCFYNTEDIKDWED) the chain is on the extracellular side. The chain crosses the membrane as a helical span at residues 199–224 (RFYLLLFSFLGLLALGVSLLCNAITG). The Cytoplasmic segment spans residues 225–250 (ITLLRVKFKSQQHRQGRSHHLEMVIQ). The helical transmembrane segment at 251 to 267 (LLAIMCVSCICWSPFLV) threads the bilayer. Over 268-285 (TMANIGINGNHSLETCET) the chain is Extracellular. A helical transmembrane segment spans residues 286–307 (TLFALRMATWNQILDPWVYILL). Over 308–359 (RKAVLKNLYKLASQCCGVHVISLHIWELSSIKNSLKVAAISESPVAEKSAST) the chain is Cytoplasmic.

This sequence belongs to the G-protein coupled receptor 1 family. In terms of assembly, isoform 1 can form heterodimers with isoform 5 (and probably other isoforms). Eye.

The protein resides in the cell membrane. In terms of biological role, receptor for prostaglandin F2-alpha (PGF2-alpha). The activity of this receptor is mediated by G proteins which activate a phosphatidylinositol-calcium second messenger system. Initiates luteolysis in the corpus luteum. Isoforms 2 to 7 do not bind PGF2-alpha but are proposed to modulate signaling by participating in variant receptor complexes; heterodimers between isoform 1 and isoform 5 are proposed to be a receptor for prostamides including the synthetic analog bimatoprost. This Homo sapiens (Human) protein is Prostaglandin F2-alpha receptor (PTGFR).